The primary structure comprises 245 residues: tRNA pseudouridine synthase A (245 aa).

Asp-52 (nucleophile) is an active-site residue. Residue Tyr-111 participates in substrate binding.

It belongs to the tRNA pseudouridine synthase TruA family. Homodimer.

The enzyme catalyses uridine(38/39/40) in tRNA = pseudouridine(38/39/40) in tRNA. Formation of pseudouridine at positions 38, 39 and 40 in the anticodon stem and loop of transfer RNAs. The chain is tRNA pseudouridine synthase A from Rhodospirillum centenum (strain ATCC 51521 / SW).